The following is a 319-amino-acid chain: DNA-directed RNA polymerase subunit alpha (319 aa).

Residues 1–227 (MKEFIFPMKI…KHMNMLTNIS (227 aa)) form an alpha N-terminal domain (alpha-NTD) region. The segment at 242-319 (LMEKLTFSIE…NIGEQRSSEV (78 aa)) is alpha C-terminal domain (alpha-CTD).

It belongs to the RNA polymerase alpha chain family. As to quaternary structure, homodimer. The RNAP catalytic core consists of 2 alpha, 1 beta, 1 beta' and 1 omega subunit. When a sigma factor is associated with the core the holoenzyme is formed, which can initiate transcription.

The enzyme catalyses RNA(n) + a ribonucleoside 5'-triphosphate = RNA(n+1) + diphosphate. DNA-dependent RNA polymerase catalyzes the transcription of DNA into RNA using the four ribonucleoside triphosphates as substrates. This chain is DNA-directed RNA polymerase subunit alpha, found in Hydrogenobaculum sp. (strain Y04AAS1).